Reading from the N-terminus, the 67-residue chain is DNA-directed RNA polymerase subunit omega (67 aa).

This sequence belongs to the RNA polymerase subunit omega family. As to quaternary structure, the RNAP catalytic core consists of 2 alpha, 1 beta, 1 beta' and 1 omega subunit. When a sigma factor is associated with the core the holoenzyme is formed, which can initiate transcription.

The enzyme catalyses RNA(n) + a ribonucleoside 5'-triphosphate = RNA(n+1) + diphosphate. Functionally, promotes RNA polymerase assembly. Latches the N- and C-terminal regions of the beta' subunit thereby facilitating its interaction with the beta and alpha subunits. The sequence is that of DNA-directed RNA polymerase subunit omega from Variovorax paradoxus (strain S110).